The following is a 339-amino-acid chain: MDGLHTELALGLIGCCGGDGQQQTAPFVAKTYQMVCDPRTDALVRWGRDNNSFVVVDPAAFSQLLLPCFFKHGNFSSFVRQLNTYGFRKVHPDRWEFAHESFLRGQTHLLPRIVRRKKRGEGGGGGGGASCSFGGGAGEHQVAAAAASVGMSGEEEDAAEDVLAKEAALFEEVQRLRHEQTAIGEELARMSQRLQATERRPDQLMSFLAKLADDPNAVTGHLLEQAAERKRRRQHLPSHEPTVCPLPPAPPPQPPQPLLALAGAAAMDGTYWWTTEHHHHHHHQMKPMTVLPSLEPPTASCGVHQVPELGGGGVMGLTTDGEAKVEPPFPFCLLGQAFF.

A coiled-coil region spans residues Glu-154–Ala-217. Residues Leu-176–Ala-212 are hydrophobic repeat HR-A/B. Residues Ala-227–Pro-248 form a disordered region. The Nuclear localization signal motif lies at Arg-229–Arg-233.

Belongs to the HSF family. Class C subfamily. In terms of assembly, homotrimer. Exhibits temperature-dependent phosphorylation.

The protein resides in the nucleus. Functionally, transcriptional regulator that specifically binds DNA of heat shock promoter elements (HSE). The polypeptide is Heat stress transcription factor C-1a (HSFC1A) (Oryza sativa subsp. japonica (Rice)).